A 478-amino-acid chain; its full sequence is Aspartate ammonia-lyase (478 aa).

5 residues coordinate L-aspartate: T109, S148, T149, N150, and T195. Residues 326–335 (GSSIMPGKVN) are SS loop. Residue S327 is the Proton acceptor of the active site. L-aspartate-binding residues include S328 and K333.

This sequence belongs to the class-II fumarase/aspartase family. Aspartase subfamily. As to quaternary structure, homotetramer.

It catalyses the reaction L-aspartate = fumarate + NH4(+). Its function is as follows. Catalyzes the reversible conversion of L-aspartate to fumarate and ammonia. The sequence is that of Aspartate ammonia-lyase from Pseudomonas fluorescens.